A 416-amino-acid polypeptide reads, in one-letter code: Splicing factor U2AF 50 kDa subunit (416 aa).

Basic and acidic residues predominate over residues 1–10 (MGYDDRERDR). Positions 1–47 (MGYDDRERDRERRRHRSRSRDRHRERSRDRRHHRNSRRKPSLYWDVP) are disordered. Basic residues-rich tracts occupy residues 11 to 21 (ERRRHRSRSRD) and 29 to 40 (DRRHHRNSRRKP). RRM domains are found at residues 93–175 (RRLY…RPHD), 207–285 (HKIF…RASV), and 318–408 (EVLC…YFDP).

It belongs to the splicing factor SR family. In terms of assembly, forms a heterodimer with the U2AF small subunit.

The protein localises to the nucleus. Its function is as follows. Necessary for the splicing of pre-mRNA. Binds to the polypyrimidine tract of introns early during spliceosome assembly. The polypeptide is Splicing factor U2AF 50 kDa subunit (U2af50) (Drosophila melanogaster (Fruit fly)).